The sequence spans 111 residues: C-type lectin lectoxin-Enh2 (111 aa).

An N-terminal signal peptide occupies residues 1-23; the sequence is MGQFTVVSLGLLAMFLSLSGAKG. A disulfide bond links Cys-26 and Cys-37. The C-type lectin domain maps to 33–108; sequence RNGVCNKLFP…CASLHPFICQ (76 aa). Positions 72–74 match the Mannose-binding motif; sequence EPN. Positions 80, 95, and 96 each coordinate Ca(2+). Cys-82 and Cys-99 form a disulfide bridge.

The protein belongs to the true venom lectin family. As to expression, expressed by the venom gland.

It is found in the secreted. Its function is as follows. Mannose-binding lectin which recognizes specific carbohydrate structures and agglutinates a variety of animal cells by binding to cell-surface glycoproteins and glycolipids. May be a calcium-dependent lectin. The polypeptide is C-type lectin lectoxin-Enh2 (Pseudoferania polylepis (Macleay's water snake)).